The sequence spans 120 residues: Ribosome-binding factor A (120 aa).

The protein belongs to the RbfA family. In terms of assembly, monomer. Binds 30S ribosomal subunits, but not 50S ribosomal subunits or 70S ribosomes.

The protein localises to the cytoplasm. One of several proteins that assist in the late maturation steps of the functional core of the 30S ribosomal subunit. Associates with free 30S ribosomal subunits (but not with 30S subunits that are part of 70S ribosomes or polysomes). Required for efficient processing of 16S rRNA. May interact with the 5'-terminal helix region of 16S rRNA. The sequence is that of Ribosome-binding factor A from Rickettsia africae (strain ESF-5).